A 323-amino-acid chain; its full sequence is ATP synthase gamma chain (323 aa).

This sequence belongs to the ATPase gamma chain family. In terms of assembly, F-type ATPases have 2 components, CF(1) - the catalytic core - and CF(0) - the membrane proton channel. CF(1) has five subunits: alpha(3), beta(3), gamma(1), delta(1), epsilon(1). CF(0) has three main subunits: a, b and c.

The protein localises to the cell membrane. Produces ATP from ADP in the presence of a proton gradient across the membrane. The gamma chain is believed to be important in regulating ATPase activity and the flow of protons through the CF(0) complex. This chain is ATP synthase gamma chain, found in Nocardia farcinica (strain IFM 10152).